The sequence spans 306 residues: Heme A synthase (306 aa).

Topologically, residues 1–5 (MKALR) are cytoplasmic. The chain crosses the membrane as a helical span at residues 6 to 26 (AVSLANTAVMLLAVLWGAWVT). The Extracellular segment spans residues 27–56 (SSDSGDGCGASWPLCKGTFMPDWDYAAIVE). Residues C34 and C41 are joined by a disulfide bond. The active site involves E56. The chain crosses the membrane as a helical span at residues 57-77 (FGHRVVSALAGLLSVAVLVWV). Residue H59 participates in heme o binding. Over 78–89 (ARVRPSETRLKR) the chain is Cytoplasmic. A helical transmembrane segment spans residues 90–110 (LAFGTFFFVVLQGGLGAAAVL). At 111-116 (RPQPDL) the chain is on the extracellular side. The helical transmembrane segment at 117–137 (VMALHFGFSLLCFTFALLVTV) threads the bilayer. Residue H121 coordinates heme o. Over 138-164 (ALGQGERAAFQRPDVSAQPVAPGLRTQ) the chain is Cytoplasmic. Residues 165 to 185 (IWGLAVYTYLVVYLGAYVRHL) traverse the membrane as a helical segment. Over 186 to 206 (GASMACTGWPLCNGELIPPLY) the chain is Extracellular. A disulfide bridge connects residues C191 and C197. A helical transmembrane segment spans residues 207-227 (GPVGANFAHRLGAALAVVLVL). H215 lines the heme b pocket. At 228–247 (RLWWTARRLTERDDLRRGAA) the chain is on the cytoplasmic side. A helical transmembrane segment spans residues 248–268 (WALALMAAQVASGALFPLGYL). Residues 269 to 277 (NLLTQLLHT) are Extracellular-facing. H276 serves as a coordination point for heme b. The helical transmembrane segment at 278-298 (GLITGFWGVLSYLCYLTLPVG) threads the bilayer. Topologically, residues 299 to 306 (RETVAVSA) are cytoplasmic.

This sequence belongs to the COX15/CtaA family. Type 1 subfamily. Interacts with CtaB. The cofactor is heme b.

It localises to the cell membrane. The enzyme catalyses Fe(II)-heme o + 2 A + H2O = Fe(II)-heme a + 2 AH2. Its pathway is porphyrin-containing compound metabolism; heme A biosynthesis; heme A from heme O: step 1/1. Functionally, catalyzes the conversion of heme O to heme A by two successive hydroxylations of the methyl group at C8. The first hydroxylation forms heme I, the second hydroxylation results in an unstable dihydroxymethyl group, which spontaneously dehydrates, resulting in the formyl group of heme A. This Symbiobacterium thermophilum (strain DSM 24528 / JCM 14929 / IAM 14863 / T) protein is Heme A synthase.